The sequence spans 206 residues: Large ribosomal subunit protein bL25 (206 aa).

It belongs to the bacterial ribosomal protein bL25 family. CTC subfamily. In terms of assembly, part of the 50S ribosomal subunit; part of the 5S rRNA/L5/L18/L25 subcomplex. Contacts the 5S rRNA. Binds to the 5S rRNA independently of L5 and L18.

In terms of biological role, this is one of the proteins that binds to the 5S RNA in the ribosome where it forms part of the central protuberance. The sequence is that of Large ribosomal subunit protein bL25 from Ralstonia nicotianae (strain ATCC BAA-1114 / GMI1000) (Ralstonia solanacearum).